The sequence spans 115 residues: Double-headed protease inhibitor, submandibular gland (115 aa).

2 Kazal-like domains span residues 6 to 66 (IGRE…ACDI) and 67 to 115 (ECTE…HGEC). Disulfide bonds link Cys-12–Cys-46, Cys-24–Cys-43, Cys-32–Cys-64, Cys-68–Cys-97, Cys-75–Cys-94, and Cys-83–Cys-115.

The protein resides in the secreted. This inhibitor is composed of two homologous actively inhibiting halves: one which inhibits trypsin, the other which inhibits elastase. The polypeptide is Double-headed protease inhibitor, submandibular gland (Canis lupus familiaris (Dog)).